The following is a 169-amino-acid chain: Peptide deformylase (169 aa).

Fe cation-binding residues include cysteine 91 and histidine 133. Glutamate 134 is a catalytic residue. Histidine 137 contacts Fe cation.

It belongs to the polypeptide deformylase family. Requires Fe(2+) as cofactor.

The catalysed reaction is N-terminal N-formyl-L-methionyl-[peptide] + H2O = N-terminal L-methionyl-[peptide] + formate. Removes the formyl group from the N-terminal Met of newly synthesized proteins. Requires at least a dipeptide for an efficient rate of reaction. N-terminal L-methionine is a prerequisite for activity but the enzyme has broad specificity at other positions. The sequence is that of Peptide deformylase from Erwinia tasmaniensis (strain DSM 17950 / CFBP 7177 / CIP 109463 / NCPPB 4357 / Et1/99).